Consider the following 569-residue polypeptide: Arginine--tRNA ligase (569 aa).

Positions 123 to 133 (ANPNGPLHVGH) match the 'HIGH' region motif.

The protein belongs to the class-I aminoacyl-tRNA synthetase family.

The protein resides in the cytoplasm. It catalyses the reaction tRNA(Arg) + L-arginine + ATP = L-arginyl-tRNA(Arg) + AMP + diphosphate. The sequence is that of Arginine--tRNA ligase from Methanosarcina mazei (strain ATCC BAA-159 / DSM 3647 / Goe1 / Go1 / JCM 11833 / OCM 88) (Methanosarcina frisia).